The chain runs to 174 residues: Large ribosomal subunit protein uL22 (174 aa).

Belongs to the universal ribosomal protein uL22 family. As to quaternary structure, part of the 50S ribosomal subunit.

Its function is as follows. This protein binds specifically to 23S rRNA. It makes multiple contacts with different domains of the 23S rRNA in the assembled 50S subunit and ribosome. The globular domain of the protein is located near the polypeptide exit tunnel on the outside of the subunit, while an extended beta-hairpin is found that lines the wall of the exit tunnel in the center of the 70S ribosome. The chain is Large ribosomal subunit protein uL22 from Nanoarchaeum equitans (strain Kin4-M).